A 57-amino-acid polypeptide reads, in one-letter code: Ribulose bisphosphate carboxylase large chain (57 aa).

Positions 1-2 (MS) are excised as a propeptide. Pro3 carries the post-translational modification N-acetylproline. N6,N6,N6-trimethyllysine is present on Lys14.

The protein belongs to the RuBisCO large chain family. Type I subfamily. Heterohexadecamer of 8 large chains and 8 small chains.

Its subcellular location is the plastid. It is found in the chloroplast. The enzyme catalyses 2 (2R)-3-phosphoglycerate + 2 H(+) = D-ribulose 1,5-bisphosphate + CO2 + H2O. It catalyses the reaction D-ribulose 1,5-bisphosphate + O2 = 2-phosphoglycolate + (2R)-3-phosphoglycerate + 2 H(+). RuBisCO catalyzes two reactions: the carboxylation of D-ribulose 1,5-bisphosphate, the primary event in carbon dioxide fixation, as well as the oxidative fragmentation of the pentose substrate in the photorespiration process. Both reactions occur simultaneously and in competition at the same active site. This is Ribulose bisphosphate carboxylase large chain (rbcL) from Camellia sinensis (Tea plant).